The primary structure comprises 668 residues: UvrABC system protein B (668 aa).

Positions 25-413 constitute a Helicase ATP-binding domain; it reads NGINTGLQHQ…QNTVQQVIRP (389 aa). Residue 38-45 participates in ATP binding; it reads GVTGSGKT. A Beta-hairpin motif is present at residues 91-114; that stretch reads YYDYYQPEAYIAASDTYIEKDSSV. The 167-residue stretch at 429–595 folds into the Helicase C-terminal domain; that stretch reads QVEDALSEIN…TIIKNIDDML (167 aa). The UVR domain maps to 629-664; that stretch reads TKVIKALEKRMRAYAKELEFEKATTIRDKITEVKQK.

Belongs to the UvrB family. As to quaternary structure, forms a heterotetramer with UvrA during the search for lesions. Interacts with UvrC in an incision complex.

Its subcellular location is the cytoplasm. In terms of biological role, the UvrABC repair system catalyzes the recognition and processing of DNA lesions. A damage recognition complex composed of 2 UvrA and 2 UvrB subunits scans DNA for abnormalities. Upon binding of the UvrA(2)B(2) complex to a putative damaged site, the DNA wraps around one UvrB monomer. DNA wrap is dependent on ATP binding by UvrB and probably causes local melting of the DNA helix, facilitating insertion of UvrB beta-hairpin between the DNA strands. Then UvrB probes one DNA strand for the presence of a lesion. If a lesion is found the UvrA subunits dissociate and the UvrB-DNA preincision complex is formed. This complex is subsequently bound by UvrC and the second UvrB is released. If no lesion is found, the DNA wraps around the other UvrB subunit that will check the other stand for damage. In Francisella tularensis subsp. tularensis (strain SCHU S4 / Schu 4), this protein is UvrABC system protein B.